A 301-amino-acid polypeptide reads, in one-letter code: MIITVNSPIASRLDKYLRRLYPLLTQGVIEKALRQKQIIVNSKKAEASLRVVEGDEIFIHDKFNLPIAQPTKLVFTDAEITLAKKITTEYLIYEDDNIIAINKPAGLATQGGSKINLSVDSALKYLNSQGADFKLVHRLDKETSGLLLIAKNYVSSVKLHDAFKEKLVEKTYLAVTYGKPIKDQGEVKTNIEKSKGSIPKITDINDNNGKLAITYYKLLKSLTNNLFLVEFIPITGRMHQLRLHAKLLGCPIFGDNKYGNDKLMPYSKYMFLHANNIVLSKKVFGKEVNLEAKLPSYFNRV.

Positions Ser-11–Pro-70 constitute an S4 RNA-binding domain. Asp-140 is an active-site residue.

The protein belongs to the pseudouridine synthase RluA family.

It catalyses the reaction uridine(955/2504/2580) in 23S rRNA = pseudouridine(955/2504/2580) in 23S rRNA. Responsible for synthesis of pseudouridine from uracil at positions 955, 2504 and 2580 in 23S ribosomal RNA. This chain is Ribosomal large subunit pseudouridine synthase C (rluC), found in Rickettsia bellii (strain RML369-C).